The primary structure comprises 132 residues: DNA-directed RNA polymerase subunit omega (132 aa).

A disordered region spans residues 89–109; it reads HSSESESIFNTSSQEEGTSFD. A compositionally biased stretch (polar residues) spans 96–105; the sequence is IFNTSSQEEG.

The protein belongs to the RNA polymerase subunit omega family. The RNAP catalytic core consists of 2 alpha, 1 beta, 1 beta' and 1 omega subunit. When a sigma factor is associated with the core the holoenzyme is formed, which can initiate transcription.

It carries out the reaction RNA(n) + a ribonucleoside 5'-triphosphate = RNA(n+1) + diphosphate. Promotes RNA polymerase assembly. Latches the N- and C-terminal regions of the beta' subunit thereby facilitating its interaction with the beta and alpha subunits. The protein is DNA-directed RNA polymerase subunit omega of Bartonella tribocorum (strain CIP 105476 / IBS 506).